Reading from the N-terminus, the 425-residue chain is 3-phosphoshikimate 1-carboxyvinyltransferase (425 aa).

Lys-22, Ser-23, and Arg-27 together coordinate 3-phosphoshikimate. Lys-22 contributes to the phosphoenolpyruvate binding site. Phosphoenolpyruvate-binding residues include Gly-95 and Arg-123. Residues Ser-169, Ser-170, Gln-171, Ser-197, Asp-313, Asn-336, and Lys-340 each coordinate 3-phosphoshikimate. Residue Gln-171 participates in phosphoenolpyruvate binding. The active-site Proton acceptor is Asp-313. Positions 344, 386, and 411 each coordinate phosphoenolpyruvate.

It belongs to the EPSP synthase family. In terms of assembly, monomer.

Its subcellular location is the cytoplasm. The catalysed reaction is 3-phosphoshikimate + phosphoenolpyruvate = 5-O-(1-carboxyvinyl)-3-phosphoshikimate + phosphate. The protein operates within metabolic intermediate biosynthesis; chorismate biosynthesis; chorismate from D-erythrose 4-phosphate and phosphoenolpyruvate: step 6/7. Functionally, catalyzes the transfer of the enolpyruvyl moiety of phosphoenolpyruvate (PEP) to the 5-hydroxyl of shikimate-3-phosphate (S3P) to produce enolpyruvyl shikimate-3-phosphate and inorganic phosphate. The chain is 3-phosphoshikimate 1-carboxyvinyltransferase from Marinomonas sp. (strain MWYL1).